Reading from the N-terminus, the 577-residue chain is Sulfite reductase [NADPH] hemoprotein beta-component (577 aa).

The [4Fe-4S] cluster site is built by C441, C447, C486, and C490. C490 contributes to the siroheme binding site.

The protein belongs to the nitrite and sulfite reductase 4Fe-4S domain family. In terms of assembly, alpha(8)-beta(8). The alpha component is a flavoprotein, the beta component is a hemoprotein. Siroheme serves as cofactor. Requires [4Fe-4S] cluster as cofactor.

It catalyses the reaction hydrogen sulfide + 3 NADP(+) + 3 H2O = sulfite + 3 NADPH + 4 H(+). It functions in the pathway sulfur metabolism; hydrogen sulfide biosynthesis; hydrogen sulfide from sulfite (NADPH route): step 1/1. Component of the sulfite reductase complex that catalyzes the 6-electron reduction of sulfite to sulfide. This is one of several activities required for the biosynthesis of L-cysteine from sulfate. This Pectobacterium atrosepticum (strain SCRI 1043 / ATCC BAA-672) (Erwinia carotovora subsp. atroseptica) protein is Sulfite reductase [NADPH] hemoprotein beta-component.